A 301-amino-acid chain; its full sequence is Porphobilinogen deaminase (301 aa).

Residue cysteine 242 is modified to S-(dipyrrolylmethanemethyl)cysteine.

This sequence belongs to the HMBS family. As to quaternary structure, monomer. It depends on dipyrromethane as a cofactor.

The catalysed reaction is 4 porphobilinogen + H2O = hydroxymethylbilane + 4 NH4(+). The protein operates within porphyrin-containing compound metabolism; protoporphyrin-IX biosynthesis; coproporphyrinogen-III from 5-aminolevulinate: step 2/4. Tetrapolymerization of the monopyrrole PBG into the hydroxymethylbilane pre-uroporphyrinogen in several discrete steps. The polypeptide is Porphobilinogen deaminase (Rickettsia canadensis (strain McKiel)).